The following is a 610-amino-acid chain: Elongation factor 4 (610 aa).

A tr-type G domain is found at 14–196 (NRIRNFSIIA…ALVANIPPPK (183 aa)). GTP is bound by residues 26–31 (DHGKST) and 143–146 (NKID).

Belongs to the TRAFAC class translation factor GTPase superfamily. Classic translation factor GTPase family. LepA subfamily.

Its subcellular location is the cell inner membrane. It carries out the reaction GTP + H2O = GDP + phosphate + H(+). In terms of biological role, required for accurate and efficient protein synthesis under certain stress conditions. May act as a fidelity factor of the translation reaction, by catalyzing a one-codon backward translocation of tRNAs on improperly translocated ribosomes. Back-translocation proceeds from a post-translocation (POST) complex to a pre-translocation (PRE) complex, thus giving elongation factor G a second chance to translocate the tRNAs correctly. Binds to ribosomes in a GTP-dependent manner. In Legionella pneumophila (strain Paris), this protein is Elongation factor 4.